A 601-amino-acid polypeptide reads, in one-letter code: Elongation factor 4 (601 aa).

The tr-type G domain occupies 5-188 (SHIRNFAIIA…ALVLRLPPPT (184 aa)). GTP is bound by residues 17 to 22 (DHGKST) and 135 to 138 (NKID).

Belongs to the TRAFAC class translation factor GTPase superfamily. Classic translation factor GTPase family. LepA subfamily.

The protein resides in the cell inner membrane. It carries out the reaction GTP + H2O = GDP + phosphate + H(+). Its function is as follows. Required for accurate and efficient protein synthesis under certain stress conditions. May act as a fidelity factor of the translation reaction, by catalyzing a one-codon backward translocation of tRNAs on improperly translocated ribosomes. Back-translocation proceeds from a post-translocation (POST) complex to a pre-translocation (PRE) complex, thus giving elongation factor G a second chance to translocate the tRNAs correctly. Binds to ribosomes in a GTP-dependent manner. This chain is Elongation factor 4, found in Rhodospirillum rubrum (strain ATCC 11170 / ATH 1.1.1 / DSM 467 / LMG 4362 / NCIMB 8255 / S1).